The primary structure comprises 421 residues: Adenylosuccinate synthetase (421 aa).

Residues 11 to 17 (GDEGKGK) and 39 to 41 (GHT) contribute to the GTP site. The Proton acceptor role is filled by D12. D12 and G39 together coordinate Mg(2+). IMP is bound by residues 12–15 (DEGK), 37–40 (NAGH), T124, R138, Q220, T235, and R299. H40 acts as the Proton donor in catalysis. 295 to 301 (TTTGRPR) is a substrate binding site. GTP is bound by residues R301, 327 to 329 (KLD), and 409 to 411 (SVG).

The protein belongs to the adenylosuccinate synthetase family. As to quaternary structure, homodimer. It depends on Mg(2+) as a cofactor.

It localises to the cytoplasm. The enzyme catalyses IMP + L-aspartate + GTP = N(6)-(1,2-dicarboxyethyl)-AMP + GDP + phosphate + 2 H(+). It participates in purine metabolism; AMP biosynthesis via de novo pathway; AMP from IMP: step 1/2. Plays an important role in the de novo pathway of purine nucleotide biosynthesis. Catalyzes the first committed step in the biosynthesis of AMP from IMP. The protein is Adenylosuccinate synthetase of Methanothrix thermoacetophila (strain DSM 6194 / JCM 14653 / NBRC 101360 / PT) (Methanosaeta thermophila).